An 89-amino-acid polypeptide reads, in one-letter code: MAKKSKIAKERKREELVNKYYELRKELKAKGDYEALRKLPRDSSPTRLTRRCKVTGRPRGVLRKFEMSRIAFREHAHKGQIPGVKKSSW.

Belongs to the universal ribosomal protein uS14 family. As to quaternary structure, part of the 30S ribosomal subunit. Contacts proteins S3 and S10.

In terms of biological role, binds 16S rRNA, required for the assembly of 30S particles and may also be responsible for determining the conformation of the 16S rRNA at the A site. This chain is Small ribosomal subunit protein uS14A, found in Staphylococcus aureus (strain Newman).